The chain runs to 308 residues: Methionyl-tRNA formyltransferase (308 aa).

Position 109 to 112 (109 to 112) interacts with (6S)-5,6,7,8-tetrahydrofolate; the sequence is SLLP.

This sequence belongs to the Fmt family.

It carries out the reaction L-methionyl-tRNA(fMet) + (6R)-10-formyltetrahydrofolate = N-formyl-L-methionyl-tRNA(fMet) + (6S)-5,6,7,8-tetrahydrofolate + H(+). Attaches a formyl group to the free amino group of methionyl-tRNA(fMet). The formyl group appears to play a dual role in the initiator identity of N-formylmethionyl-tRNA by promoting its recognition by IF2 and preventing the misappropriation of this tRNA by the elongation apparatus. In Phenylobacterium zucineum (strain HLK1), this protein is Methionyl-tRNA formyltransferase.